The sequence spans 116 residues: uncharacterized protein (116 aa).

A run of 2 helical transmembrane segments spans residues A40–L60 and F72–I92.

Its subcellular location is the membrane. This is an uncharacterized protein from Saccharomyces cerevisiae (strain ATCC 204508 / S288c) (Baker's yeast).